The following is a 60-amino-acid chain: Rubredoxin 4 (60 aa).

Positions Tyr4 to Val55 constitute a Rubredoxin-like domain. Fe cation is bound by residues Cys9, Cys12, Cys42, and Cys45.

The protein belongs to the rubredoxin family. The cofactor is Fe(3+).

In terms of biological role, involved in the hydrocarbon hydroxylating system, which transfers electrons from NADH to rubredoxin reductase and then through rubredoxin to alkane 1 monooxygenase. This Rhodococcus sp. (strain Q15) protein is Rubredoxin 4 (rubA4).